Here is a 361-residue protein sequence, read N- to C-terminus: Peptide chain release factor 1 (361 aa).

Glutamine 235 is subject to N5-methylglutamine.

The protein belongs to the prokaryotic/mitochondrial release factor family. In terms of processing, methylated by PrmC. Methylation increases the termination efficiency of RF1.

It is found in the cytoplasm. Peptide chain release factor 1 directs the termination of translation in response to the peptide chain termination codons UAG and UAA. The chain is Peptide chain release factor 1 from Chlamydia felis (strain Fe/C-56) (Chlamydophila felis).